A 502-amino-acid polypeptide reads, in one-letter code: MGKVLVMLTAAAAVVACSVATVMVRRRMKGRRKWRRVVGLLKDLEEACETPLGRLRQMVDAIAVEMQAGLVSEGGSKLKMLLTFVDDLPNGSETGTYYALHLGGSYFRIIKVHLGGQRSSLEVQDVERHSIPTSLMNSTSEVLFDFLASSLQRFIEKEGNDFSLSQPLKRELAFTFSFPVKQTSISSGVLIKWTKGFAISEMAGEDIAECLQGALNKRGLDIRVAALVNDTVGALSFGHFHDPDTIAAVVFGTGSNACYLERTDAIIKCQNPRTTSGSMVVNMEWGNFWSSRLPRTSYDLELDAESMNSNDMGFEKMIGGMYLGDIVRRVILRMSQESDIFGPISSILSTPFVLRTNSVSAMHEDDTSELQEVARILKDLGVSEVPMKVRKLVVKICDVVTRRAARLAAAGIAGILKKVGRDGSGGGRRSDKQIMRRTVVAVEGGLYLNYRMFREYMDEALRDILGEDVAQHVVVKAMEDGSSIGSALLLASSQSVQTIPSV.

Residues Val4–Val24 traverse the membrane as a helical segment. The region spanning Arg35–Ala491 is the Hexokinase domain. Residues Asn90–Val228 form a hexokinase small subdomain region. ADP-binding residues include Gly104 and Ser105. Positions 194, 195, 229, and 230 each coordinate D-glucose. The tract at residues Asn229–Asp480 is hexokinase large subdomain. ADP is bound at residue Thr253. D-glucose-binding residues include Asn256, Glu284, and Glu315. Gly445 is an ADP binding site.

Belongs to the hexokinase family.

The protein resides in the mitochondrion outer membrane. The enzyme catalyses a D-hexose + ATP = a D-hexose 6-phosphate + ADP + H(+). It catalyses the reaction D-fructose + ATP = D-fructose 6-phosphate + ADP + H(+). The catalysed reaction is D-glucose + ATP = D-glucose 6-phosphate + ADP + H(+). It functions in the pathway carbohydrate metabolism; hexose metabolism. Its pathway is carbohydrate degradation; glycolysis; D-glyceraldehyde 3-phosphate and glycerone phosphate from D-glucose: step 1/4. Fructose and glucose phosphorylating enzyme. May be involved in the phosphorylation of glucose during the export from mitochondrion to cytosol. The polypeptide is Hexokinase-4 (Arabidopsis thaliana (Mouse-ear cress)).